The following is a 370-amino-acid chain: uncharacterized protein (370 aa).

It belongs to the metallo-dependent hydrolases superfamily.

This is an uncharacterized protein from Mycobacterium bovis (strain ATCC BAA-935 / AF2122/97).